A 66-amino-acid chain; its full sequence is UPF0370 protein YpfN (66 aa).

Residues 4 to 24 (LAKYWWILVLVFLVGVLLNVI) form a helical membrane-spanning segment. Positions 39 to 66 (KPELPPHRDFNDKWDDEEDWPKKDQPKK) are disordered. A compositionally biased stretch (basic and acidic residues) spans 42-51 (LPPHRDFNDK).

This sequence belongs to the UPF0370 family.

The protein resides in the cell membrane. This chain is UPF0370 protein YpfN, found in Salmonella paratyphi A (strain AKU_12601).